We begin with the raw amino-acid sequence, 341 residues long: 1-aminocyclopropane-1-carboxylate deaminase (341 aa).

Position 1 is an N-acetylserine (Ser1). Lys51 is subject to N6-(pyridoxal phosphate)lysine. Ser78 (nucleophile) is an active-site residue.

Belongs to the ACC deaminase/D-cysteine desulfhydrase family. In terms of assembly, homodimer. Pyridoxal 5'-phosphate serves as cofactor.

It carries out the reaction 1-aminocyclopropane-1-carboxylate + H2O = 2-oxobutanoate + NH4(+). In terms of biological role, catalyzes a cyclopropane ring-opening reaction, the irreversible conversion of 1-aminocyclopropane-1-carboxylate (ACC) to ammonia and alpha-ketobutyrate. The protein is 1-aminocyclopropane-1-carboxylate deaminase of Cyberlindnera saturnus (Yeast).